We begin with the raw amino-acid sequence, 413 residues long: Multifunctional CCA protein (413 aa).

The ATP site is built by glycine 8 and arginine 11. Residues glycine 8 and arginine 11 each contribute to the CTP site. The Mg(2+) site is built by aspartate 21 and aspartate 23. ATP is bound by residues arginine 91, arginine 143, and arginine 146. 3 residues coordinate CTP: arginine 91, arginine 143, and arginine 146. The region spanning 232–333 is the HD domain; the sequence is TGVHVMMVVD…VRLFERSDAL (102 aa).

The protein belongs to the tRNA nucleotidyltransferase/poly(A) polymerase family. Bacterial CCA-adding enzyme type 1 subfamily. In terms of assembly, monomer. Can also form homodimers and oligomers. Mg(2+) serves as cofactor. Requires Ni(2+) as cofactor.

The enzyme catalyses a tRNA precursor + 2 CTP + ATP = a tRNA with a 3' CCA end + 3 diphosphate. It carries out the reaction a tRNA with a 3' CCA end + 2 CTP + ATP = a tRNA with a 3' CCACCA end + 3 diphosphate. Its function is as follows. Catalyzes the addition and repair of the essential 3'-terminal CCA sequence in tRNAs without using a nucleic acid template. Adds these three nucleotides in the order of C, C, and A to the tRNA nucleotide-73, using CTP and ATP as substrates and producing inorganic pyrophosphate. tRNA 3'-terminal CCA addition is required both for tRNA processing and repair. Also involved in tRNA surveillance by mediating tandem CCA addition to generate a CCACCA at the 3' terminus of unstable tRNAs. While stable tRNAs receive only 3'-terminal CCA, unstable tRNAs are marked with CCACCA and rapidly degraded. The chain is Multifunctional CCA protein from Burkholderia orbicola (strain MC0-3).